The chain runs to 340 residues: Aurora kinase A- and ninein-interacting protein (340 aa).

Residues 175–340 (QREAKRKGEG…DSEGNRVIRH (166 aa)) are interaction with AURKA. Residues 178–190 (AKRKGEGLRESKT) show a composition bias toward basic and acidic residues. A disordered region spans residues 178 to 209 (AKRKGEGLRESKTDCPGMGSHIRPPGSKCHQP). Positions 266-340 (RDSWSQLFTE…DSEGNRVIRH (75 aa)) are interaction with RBBP8/CtIP. Ser277 is modified (phosphoserine). Residues 293-317 (DVTNARNQGSGQFPDSPQAQGQDGP) form a disordered region. Residues 296–313 (NARNQGSGQFPDSPQAQG) are compositionally biased toward polar residues.

This sequence belongs to the AUNIP family. In terms of assembly, interacts (via C-terminus) with AURKA (via C-terminus). Interacts (via N-terminus) with NIN; this interaction blocks NIN phosphorylation by both AURKA and GSK3B. Identified in a complex with NIN and AURKA. Interacts with RBBP8/CtIP.

The protein resides in the nucleus. It localises to the chromosome. The protein localises to the cytoplasm. Its subcellular location is the cytoskeleton. It is found in the microtubule organizing center. The protein resides in the centrosome. It localises to the spindle pole. In terms of biological role, DNA-binding protein that accumulates at DNA double-strand breaks (DSBs) following DNA damage and promotes DNA resection and homologous recombination. Serves as a sensor of DNA damage: binds DNA with a strong preference for DNA substrates that mimic structures generated at stalled replication forks, and anchors RBBP8/CtIP to DSB sites to promote DNA end resection and ensuing homologous recombination repair. Inhibits non-homologous end joining (NHEJ). Required for the dynamic movement of AURKA at the centrosomes and spindle apparatus during the cell cycle. This is Aurora kinase A- and ninein-interacting protein from Mus musculus (Mouse).